The chain runs to 83 residues: Small ribosomal subunit protein bS16 (83 aa).

It belongs to the bacterial ribosomal protein bS16 family.

This Syntrophus aciditrophicus (strain SB) protein is Small ribosomal subunit protein bS16.